We begin with the raw amino-acid sequence, 257 residues long: Ribonuclease HII (257 aa).

The region spanning 72–257 is the RNase H type-2 domain; that stretch reads ERVAGIDEVG…FSPVQKILQA (186 aa). A divalent metal cation is bound by residues aspartate 78, glutamate 79, and aspartate 170.

Belongs to the RNase HII family. The cofactor is Mn(2+). Requires Mg(2+) as cofactor.

Its subcellular location is the cytoplasm. The catalysed reaction is Endonucleolytic cleavage to 5'-phosphomonoester.. Endonuclease that specifically degrades the RNA of RNA-DNA hybrids. The chain is Ribonuclease HII from Levilactobacillus brevis (strain ATCC 367 / BCRC 12310 / CIP 105137 / JCM 1170 / LMG 11437 / NCIMB 947 / NCTC 947) (Lactobacillus brevis).